Here is a 461-residue protein sequence, read N- to C-terminus: D-arabinono-1,4-lactone oxidase (461 aa).

An FAD-binding PCMH-type domain is found at phenylalanine 24–alanine 194. Histidine 61 bears the Pros-8alpha-FAD histidine mark.

The protein belongs to the oxygen-dependent FAD-linked oxidoreductase family. It depends on FAD as a cofactor.

The protein resides in the mitochondrion membrane. It catalyses the reaction D-arabinono-1,4-lactone + O2 = dehydro-D-arabinono-1,4-lactone + H2O2 + H(+). Its pathway is cofactor biosynthesis; D-erythroascorbate biosynthesis; dehydro-D-arabinono-1,4-lactone from D-arabinose: step 2/2. The chain is D-arabinono-1,4-lactone oxidase (alo1) from Schizosaccharomyces pombe (strain 972 / ATCC 24843) (Fission yeast).